A 326-amino-acid polypeptide reads, in one-letter code: uncharacterized protein (326 aa).

Residues 293-326 (HRNYDANHSTSGEEENSGSRSRIAELSQSTIHRR) are disordered.

This is an uncharacterized protein from Oryza latifolia (Indian wild rice).